Here is a 228-residue protein sequence, read N- to C-terminus: Urease accessory protein UreF (228 aa).

The protein belongs to the UreF family. UreD, UreF and UreG form a complex that acts as a GTP-hydrolysis-dependent molecular chaperone, activating the urease apoprotein by helping to assemble the nickel containing metallocenter of UreC. The UreE protein probably delivers the nickel.

The protein resides in the cytoplasm. In terms of biological role, required for maturation of urease via the functional incorporation of the urease nickel metallocenter. The polypeptide is Urease accessory protein UreF (Alkalilimnicola ehrlichii (strain ATCC BAA-1101 / DSM 17681 / MLHE-1)).